The sequence spans 289 residues: Probable endonuclease 4 (289 aa).

Zn(2+)-binding residues include H74, H115, E150, D184, H187, H218, D231, H233, and E263.

It belongs to the AP endonuclease 2 family. Zn(2+) serves as cofactor.

The enzyme catalyses Endonucleolytic cleavage to 5'-phosphooligonucleotide end-products.. In terms of biological role, endonuclease IV plays a role in DNA repair. It cleaves phosphodiester bonds at apurinic or apyrimidinic (AP) sites, generating a 3'-hydroxyl group and a 5'-terminal sugar phosphate. This is Probable endonuclease 4 from Mycoplasma capricolum subsp. capricolum (strain California kid / ATCC 27343 / NCTC 10154).